The primary structure comprises 202 residues: uncharacterized protein (202 aa).

One can recognise an HTH tetR-type domain in the interval 14–74; the sequence is NAKTERILDV…AMADRYFQRC (61 aa).

This is an uncharacterized protein from Xanthobacter autotrophicus.